Here is a 1209-residue protein sequence, read N- to C-terminus: Neural cell adhesion molecule L1-like protein (1209 aa).

Residues 1–25 form the signal peptide; that stretch reads MMELPLCGRGLILSLIFLLLKLSAA. Topologically, residues 26 to 1083 are extracellular; that stretch reads EIPLSVQQVP…LYDDISTQGW (1058 aa). 2 consecutive Ig-like C2-type domains span residues 35–124 and 128–223; these read PTIV…EEIE and PGVP…MKLT. 2 disulfides stabilise this stretch: Cys-57/Cys-109 and Cys-153/Cys-204. N-linked (GlcNAc...) asparagine glycosylation is present at Asn-87. Asn-225 and Asn-299 each carry an N-linked (GlcNAc...) asparagine glycan. 4 consecutive Ig-like C2-type domains span residues 235–328, 331–417, 423–510, and 515–607; these read PKLL…VTVE, PRWK…ANID, PLIK…ANLD, and TKLR…TQVT. 4 disulfide bridges follow: Cys-262–Cys-310, Cys-352–Cys-401, Cys-445–Cys-494, and Cys-536–Cys-591. Asn-476 carries N-linked (GlcNAc...) asparagine glycosylation. The short motif at 555–558 is the DGEA element; it reads DGEA. N-linked (GlcNAc...) asparagine glycosylation is found at Asn-562 and Asn-580. Fibronectin type-III domains lie at 614-709, 714-807, 812-914, and 918-1015; these read PPGN…TPPA, NPQN…SGED, APVI…TPEG, and QPSF…LGEG. The interval 696–717 is disordered; the sequence is HASLPSDHHETPPAAPDKNPQN. N-linked (GlcNAc...) asparagine glycans are attached at residues Asn-767, Asn-822, Asn-945, and Asn-1027. Residues 1084 to 1104 form a helical membrane-spanning segment; sequence FIGLMCAIALLTLILLTICFV. Topologically, residues 1105-1209 are cytoplasmic; the sequence is KRNRGGKYSV…SSTATFPLRA (105 aa). Residues 1115 to 1133 show a composition bias toward basic and acidic residues; it reads KEKEDLHPDPEVQSAKDET. A disordered region spans residues 1115 to 1170; the sequence is KEKEDLHPDPEVQSAKDETFGEYSDSDEKPLKGSLRSLNRNMQPTESADSLVEYGE. 3 positions are modified to phosphoserine: Ser-1148, Ser-1161, and Ser-1181. Residues 1150–1162 show a composition bias toward polar residues; sequence RSLNRNMQPTESA. The FIG[AQ]Y signature appears at 1182 to 1186; that stretch reads FIGAY.

Belongs to the immunoglobulin superfamily. L1/neurofascin/NgCAM family. May interact with L1CAM. May interact with ITGB1/ITGA1 heterodimer and ITGB1/ITGA2 heterodimer as well as with ANK3. In terms of processing, cleavage by metalloprotease ADAM8 in the extracellular part generates 2 soluble forms (125 kDa and 165 kDa) in vitro and is inhibited by metalloprotease inhibitors. In brain extracts, these two soluble forms are also present and are dramatically reduced in mice lacking ADAM8. Cleaved by BACE1. Post-translationally, N-glycosylated. Contains N-linked oligosaccharides with a sulfated carbohydrate structure type HNK-1 (SO4-3-GlcUABeta1,3GalBeta1,4GlcNAc). O-glycosylated. In terms of tissue distribution, expressed in the brain, in the cerebellum and in the spinal cord. Detected in the retina and the optic nerve. Expressed in neurons and glial cells in the central nervous system and by Schwann cells in the peripheral nervous system.

Its subcellular location is the cell membrane. It localises to the secreted. The protein resides in the extracellular space. It is found in the extracellular matrix. Its function is as follows. Extracellular matrix and cell adhesion protein that plays a role in nervous system development and in synaptic plasticity. Both soluble and membranous forms promote neurite outgrowth of cerebellar and hippocampal neurons and suppress neuronal cell death. Plays a role in neuronal positioning of pyramidal neurons as well as in regulation of both the number of interneurons and the efficacy of GABAergic synapses. May play a role in regulating cell migration in nerve regeneration and cortical development. Potentiates integrin-dependent cell migration towards extracellular matrix proteins. Recruits ANK3 to the plasma membrane. This is Neural cell adhesion molecule L1-like protein (Chl1) from Mus musculus (Mouse).